The following is a 455-amino-acid chain: Ribosomal protein uS12 methylthiotransferase RimO (455 aa).

The 111-residue stretch at 30-140 (PTIGMVSLGC…VLDAVHGAVP (111 aa)) folds into the MTTase N-terminal domain. Residues cysteine 39, cysteine 75, cysteine 104, cysteine 171, cysteine 175, and cysteine 178 each coordinate [4Fe-4S] cluster. The 230-residue stretch at 157–386 (LTPRHFSYLK…MEKAQAISEV (230 aa)) folds into the Radical SAM core domain. One can recognise a TRAM domain in the interval 389–455 (AAKVGRRIEV…GEYDIWGRPV (67 aa)).

Belongs to the methylthiotransferase family. RimO subfamily. The cofactor is [4Fe-4S] cluster.

The protein localises to the cytoplasm. It catalyses the reaction L-aspartate(89)-[ribosomal protein uS12]-hydrogen + (sulfur carrier)-SH + AH2 + 2 S-adenosyl-L-methionine = 3-methylsulfanyl-L-aspartate(89)-[ribosomal protein uS12]-hydrogen + (sulfur carrier)-H + 5'-deoxyadenosine + L-methionine + A + S-adenosyl-L-homocysteine + 2 H(+). Catalyzes the methylthiolation of an aspartic acid residue of ribosomal protein uS12. This chain is Ribosomal protein uS12 methylthiotransferase RimO, found in Cereibacter sphaeroides (strain ATCC 17023 / DSM 158 / JCM 6121 / CCUG 31486 / LMG 2827 / NBRC 12203 / NCIMB 8253 / ATH 2.4.1.) (Rhodobacter sphaeroides).